Here is a 496-residue protein sequence, read N- to C-terminus: MDPLGARSCFVDADALPCWADVRDGEGEDVPDGGRKDAPHGGLHSPFPYRNDINKKVILWRGDVALLSCTALVNTSNETLTDKNPVSDSIFRYSGPELSEEMQKLKGCRTGEAKLTKGFNLAARYIIHTVGPKYKTKYRTAAESSLYSCYRNVLQLAKEQGMASVGFCVIATQKRCYPPEDSTHIALRTVRRFLEAHGAALEKVVFAVTEQEEGTYRRLLPLYFPRSLEEEQRSIPFLPQDIGNAEGEPVVPERQIRISEKPGGQDDDSEEEGLVKDLSVIGSHAFARMEGDVDKQRRLALQGQLSGAAMQKQHQRNYNRWLSRARTEDLSDIAALKALYQSGVDNCGRTVMVVVGRNIPVLLIDMEKALLYFIHMMDHVAAKEYVLVYFHTLTGEHNHPDSDFLKNMYDIVDVKYKKNLKALYFVHPTFRSKVSSWFFTTFTVSGLKDKVHQVESLHQLFSAVPPEQIEIPPFVLDYDARENGPFFPSQSSFLSL.

Disordered stretches follow at residues 22 to 45 (VRDG…GLHS) and 252 to 271 (PERQ…DSEE). One can recognise a Macro domain in the interval 44-224 (HSPFPYRNDI…TYRRLLPLYF (181 aa)). The span at 254 to 264 (RQIRISEKPGG) shows a compositional bias: basic and acidic residues. In terms of domain architecture, CRAL-TRIO spans 329–483 (DLSDIAALKA…FVLDYDAREN (155 aa)).

Belongs to the GDAP2 family.

This chain is Ganglioside-induced differentiation-associated protein 2, found in Xenopus tropicalis (Western clawed frog).